We begin with the raw amino-acid sequence, 146 residues long: Endoribonuclease YbeY (146 aa).

3 residues coordinate Zn(2+): His108, His112, and His118.

The protein belongs to the endoribonuclease YbeY family. The cofactor is Zn(2+).

The protein resides in the cytoplasm. In terms of biological role, single strand-specific metallo-endoribonuclease involved in late-stage 70S ribosome quality control and in maturation of the 3' terminus of the 16S rRNA. The protein is Endoribonuclease YbeY of Aster yellows witches'-broom phytoplasma (strain AYWB).